The primary structure comprises 584 residues: 2-succinyl-5-enolpyruvyl-6-hydroxy-3-cyclohexene-1-carboxylate synthase (584 aa).

The interval 563-584 is disordered; it reads TDAEASHRERERLADRVTGLSV. Basic and acidic residues predominate over residues 566–577; that stretch reads EASHRERERLAD.

It belongs to the TPP enzyme family. MenD subfamily. In terms of assembly, homodimer. The cofactor is Mg(2+). Requires Mn(2+) as cofactor. Thiamine diphosphate is required as a cofactor.

It carries out the reaction isochorismate + 2-oxoglutarate + H(+) = 5-enolpyruvoyl-6-hydroxy-2-succinyl-cyclohex-3-ene-1-carboxylate + CO2. It participates in quinol/quinone metabolism; 1,4-dihydroxy-2-naphthoate biosynthesis; 1,4-dihydroxy-2-naphthoate from chorismate: step 2/7. Its pathway is quinol/quinone metabolism; menaquinone biosynthesis. Catalyzes the thiamine diphosphate-dependent decarboxylation of 2-oxoglutarate and the subsequent addition of the resulting succinic semialdehyde-thiamine pyrophosphate anion to isochorismate to yield 2-succinyl-5-enolpyruvyl-6-hydroxy-3-cyclohexene-1-carboxylate (SEPHCHC). The protein is 2-succinyl-5-enolpyruvyl-6-hydroxy-3-cyclohexene-1-carboxylate synthase of Halobacterium salinarum (strain ATCC 29341 / DSM 671 / R1).